Reading from the N-terminus, the 874-residue chain is Speckle targeted PIP5K1A-regulated poly(A) polymerase (874 aa).

The segment at 16–46 (FRCCLCHVTTANRPSLDAHLGGRKHRHLVEL) adopts a Matrin-type zinc-finger fold. An RRM domain is found at 56 to 128 (RSVFVSGFPR…HRLRVRPREQ (73 aa)). The tract at residues 113 to 146 (QHSLGGHRLRVRPREQKEFQSPASKSPKGAAPDS) is disordered. An ATP-binding site is contributed by serine 205. Residues aspartate 216 and aspartate 218 each coordinate Mg(2+). UTP contacts are provided by aspartate 216 and aspartate 218. The segment at 252-334 (QALACTPASP…ELAETPKEEK (83 aa)) is disordered. Over residues 259 to 269 (ASPPDSQPPAS) the composition is skewed to pro residues. Positions 280 to 291 (TPSSSLAPQTPD) are enriched in polar residues. Asparagine 392 lines the ATP pocket. Residues asparagine 392, arginine 414, tyrosine 432, and histidine 549 each contribute to the UTP site. Residues 491–549 (LSSLLAQFFSCVSCWDLRGSLLSLREGQALPVAGGLPSNLWEGLRLGPLNLQDPFDLSH) form the PAP-associated domain. Positions 598–874 (SSPSSLLSAT…FLPQAIRHLK (277 aa)) are KA1; binds the bulging loops of U6 snRNA but is dispensable for terminal uridylyltransferase activity. 2 disordered regions span residues 638–662 (ATKR…KRLK) and 705–761 (MQSP…ASLP). Residue serine 750 is modified to Phosphoserine.

It belongs to the DNA polymerase type-B-like family. Associates with the cleavage and polyadenylation specificity factor (CPSF) complex. Interacts with CPSF1 and CPSF3; the interaction is direct. Interacts with PIP5K1A. Requires Mg(2+) as cofactor. The cofactor is Mn(2+). Post-translationally, phosphorylated by CK1 in the proline-rich (Pro-rich) region. In terms of tissue distribution, widely expressed.

It localises to the nucleus. The protein resides in the nucleolus. It is found in the nucleus speckle. The enzyme catalyses RNA(n) + UTP = RNA(n)-3'-uridine ribonucleotide + diphosphate. It carries out the reaction RNA(n) + ATP = RNA(n)-3'-adenine ribonucleotide + diphosphate. Its activity is regulated as follows. Adenylyltransferase activity is specifically phosphatidylinositol 4,5-bisphosphate (PtdIns(4,5)P2). Its function is as follows. Poly(A) polymerase that creates the 3'-poly(A) tail of specific pre-mRNAs. Localizes to nuclear speckles together with PIP5K1A and mediates polyadenylation of a select set of mRNAs, such as HMOX1. In addition to polyadenylation, it is also required for the 3'-end cleavage of pre-mRNAs: binds to the 3'UTR of targeted pre-mRNAs and promotes the recruitment and assembly of the CPSF complex on the 3'UTR of pre-mRNAs. In addition to adenylyltransferase activity, also has uridylyltransferase activity. However, the ATP ratio is higher than UTP in cells, suggesting that it functions primarily as a poly(A) polymerase. Acts as a specific terminal uridylyltransferase for U6 snRNA in vitro: responsible for a controlled elongation reaction that results in the restoration of the four 3'-terminal UMP-residues found in newly transcribed U6 snRNA. Not involved in replication-dependent histone mRNA degradation. This is Speckle targeted PIP5K1A-regulated poly(A) polymerase (TUT1) from Homo sapiens (Human).